The sequence spans 370 residues: Cytochrome b (370 aa).

Helical transmembrane passes span 25–45, 69–90, 105–125, and 170–190; these read FGSM…FLAV, WMMQ…YIHI, WLSG…GYVL, and FFAL…LHVM. The heme b site is built by His75 and His89. 2 residues coordinate heme b: His174 and His188. His193 contributes to the a ubiquinone binding site. 4 helical membrane-spanning segments follow: residues 218–238, 280–300, 312–332, and 339–358; these read YKDL…ISFY, LGGA…PFTH, FMQL…WTAT, and FTMI…ISNP.

This sequence belongs to the cytochrome b family. As to quaternary structure, the cytochrome bc1 complex contains 3 respiratory subunits (MT-CYB, CYC1 and UQCRFS1), 2 core proteins (UQCRC1 and UQCRC2) and probably 6 low-molecular weight proteins. It depends on heme b as a cofactor.

The protein resides in the mitochondrion inner membrane. Component of the ubiquinol-cytochrome c reductase complex (complex III or cytochrome b-c1 complex) that is part of the mitochondrial respiratory chain. The b-c1 complex mediates electron transfer from ubiquinol to cytochrome c. Contributes to the generation of a proton gradient across the mitochondrial membrane that is then used for ATP synthesis. This Corallus hortulanus enydris (Garden tree boa) protein is Cytochrome b (MT-CYB).